Here is a 650-residue protein sequence, read N- to C-terminus: Chaperone protein DnaK (650 aa).

A Phosphothreonine; by autocatalysis modification is found at Thr200.

The protein belongs to the heat shock protein 70 family.

Its function is as follows. Acts as a chaperone. The chain is Chaperone protein DnaK from Burkholderia orbicola (strain MC0-3).